The primary structure comprises 252 residues: Geranylgeranylglyceryl phosphate synthase (252 aa).

Residues aspartate 26 and serine 55 each coordinate Mg(2+). Sn-glycerol 1-phosphate contacts are provided by residues 174–180 (YLEAGSG), 205–206 (GG), and 227–228 (GT).

It belongs to the GGGP/HepGP synthase family. Group II subfamily. In terms of assembly, homotetramer. Homohexamer. Mg(2+) is required as a cofactor.

Its subcellular location is the cytoplasm. It catalyses the reaction sn-glycerol 1-phosphate + (2E,6E,10E)-geranylgeranyl diphosphate = sn-3-O-(geranylgeranyl)glycerol 1-phosphate + diphosphate. It functions in the pathway membrane lipid metabolism; glycerophospholipid metabolism. Its function is as follows. Prenyltransferase that catalyzes the transfer of the geranylgeranyl moiety of geranylgeranyl diphosphate (GGPP) to the C3 hydroxyl of sn-glycerol-1-phosphate (G1P). This reaction is the first ether-bond-formation step in the biosynthesis of archaeal membrane lipids. This chain is Geranylgeranylglyceryl phosphate synthase, found in Thermococcus kodakarensis (strain ATCC BAA-918 / JCM 12380 / KOD1) (Pyrococcus kodakaraensis (strain KOD1)).